Here is a 257-residue protein sequence, read N- to C-terminus: Imidazole glycerol phosphate synthase subunit HisF (257 aa).

Catalysis depends on residues Asp-11 and Asp-130.

The protein belongs to the HisA/HisF family. In terms of assembly, heterodimer of HisH and HisF.

The protein localises to the cytoplasm. It carries out the reaction 5-[(5-phospho-1-deoxy-D-ribulos-1-ylimino)methylamino]-1-(5-phospho-beta-D-ribosyl)imidazole-4-carboxamide + L-glutamine = D-erythro-1-(imidazol-4-yl)glycerol 3-phosphate + 5-amino-1-(5-phospho-beta-D-ribosyl)imidazole-4-carboxamide + L-glutamate + H(+). It functions in the pathway amino-acid biosynthesis; L-histidine biosynthesis; L-histidine from 5-phospho-alpha-D-ribose 1-diphosphate: step 5/9. In terms of biological role, IGPS catalyzes the conversion of PRFAR and glutamine to IGP, AICAR and glutamate. The HisF subunit catalyzes the cyclization activity that produces IGP and AICAR from PRFAR using the ammonia provided by the HisH subunit. This Shewanella piezotolerans (strain WP3 / JCM 13877) protein is Imidazole glycerol phosphate synthase subunit HisF.